The primary structure comprises 145 residues: Transcriptional regulator MraZ (145 aa).

2 SpoVT-AbrB domains span residues 5 to 49 and 78 to 121; these read TYNH…LESE and TYKI…AKEV.

This sequence belongs to the MraZ family. As to quaternary structure, forms oligomers.

Its subcellular location is the cytoplasm. The protein resides in the nucleoid. In Ureaplasma parvum serovar 3 (strain ATCC 27815 / 27 / NCTC 11736), this protein is Transcriptional regulator MraZ.